The chain runs to 65 residues: Prokaryotic ubiquitin-like protein UBact (65 aa).

Positions Met-1 to Met-17 are enriched in polar residues. Residues Met-1–Glu-65 form a disordered region. Basic and acidic residues predominate over residues Lys-35–Glu-65. Residue Glu-65 forms an Isoglutamyl lysine isopeptide (Glu-Lys) (interchain with K-? in acceptor proteins) linkage.

It belongs to the ubiquitin-like protein UBact family.

In terms of biological role, may function as a protein modifier covalently attached to lysine residues of substrate proteins. This may serve to target the modified proteins for degradation by proteasomes. The polypeptide is Prokaryotic ubiquitin-like protein UBact (Methylacidiphilum infernorum (isolate V4) (Methylokorus infernorum (strain V4))).